Here is a 443-residue protein sequence, read N- to C-terminus: ATP-dependent protease ATPase subunit HslU (443 aa).

Residues Ile18, 60 to 65 (GVGKTE), Asp256, Glu321, and Arg393 each bind ATP.

The protein belongs to the ClpX chaperone family. HslU subfamily. In terms of assembly, a double ring-shaped homohexamer of HslV is capped on each side by a ring-shaped HslU homohexamer. The assembly of the HslU/HslV complex is dependent on binding of ATP.

It is found in the cytoplasm. ATPase subunit of a proteasome-like degradation complex; this subunit has chaperone activity. The binding of ATP and its subsequent hydrolysis by HslU are essential for unfolding of protein substrates subsequently hydrolyzed by HslV. HslU recognizes the N-terminal part of its protein substrates and unfolds these before they are guided to HslV for hydrolysis. The polypeptide is ATP-dependent protease ATPase subunit HslU (Salmonella agona (strain SL483)).